The primary structure comprises 313 residues: uncharacterized protein (313 aa).

The disordered stretch occupies residues 1–313; the sequence is MSRNGRNDYD…SSSRSGSSRR (313 aa). Composition is skewed to basic and acidic residues over residues 24–33, 40–85, 95–116, and 156–181; these read LARDRERDSE, TGER…DVKY, TTRE…DELG, and TDER…DEFG. Positions 194-205 are enriched in basic residues; sequence RGRRSNSRRRSS. 2 stretches are compositionally biased toward low complexity: residues 206 to 266 and 272 to 313; these read NARS…GSKS and SRSG…SSRR.

It is found in the virion. This is an uncharacterized protein from Acanthamoeba polyphaga mimivirus (APMV).